Reading from the N-terminus, the 141-residue chain is Large ribosomal subunit protein uL14 (141 aa).

Belongs to the universal ribosomal protein uL14 family. Part of the 50S ribosomal subunit. Forms a cluster with proteins L3 and L24e, part of which may contact the 16S rRNA in 2 intersubunit bridges.

In terms of biological role, binds to 23S rRNA. Forms part of two intersubunit bridges in the 70S ribosome. The sequence is that of Large ribosomal subunit protein uL14 from Pyrococcus furiosus (strain ATCC 43587 / DSM 3638 / JCM 8422 / Vc1).